We begin with the raw amino-acid sequence, 216 residues long: Adenylate kinase (216 aa).

ATP is bound at residue 10 to 15 (GAGKGT). An NMP region spans residues 30 to 59 (STGDMFRAAMKAETEMGLQAKSFIDKGALV). AMP-binding positions include threonine 31, arginine 36, 57–59 (ALV), 85–88 (GFPR), and glutamine 92. An LID region spans residues 126–163 (GRRICKECGATYHLEFNPPAKADVCDKCGGELYQRSDD). Arginine 127 provides a ligand contact to ATP. 2 residues coordinate Zn(2+): cysteine 130 and cysteine 133. ATP is bound at residue 136 to 137 (TY). Cysteine 150 and cysteine 153 together coordinate Zn(2+). AMP-binding residues include arginine 160 and arginine 171. Residue glutamine 199 participates in ATP binding.

Belongs to the adenylate kinase family. As to quaternary structure, monomer.

Its subcellular location is the cytoplasm. It catalyses the reaction AMP + ATP = 2 ADP. Its pathway is purine metabolism; AMP biosynthesis via salvage pathway; AMP from ADP: step 1/1. Functionally, catalyzes the reversible transfer of the terminal phosphate group between ATP and AMP. Plays an important role in cellular energy homeostasis and in adenine nucleotide metabolism. The chain is Adenylate kinase from Bacillus cereus (strain G9842).